The chain runs to 146 residues: Gonadotropin subunit beta-2 (146 aa).

The N-terminal stretch at 1–28 (TGTPVKILVVRNILLLLFCLVVLLVFAQ) is a signal peptide. 6 disulfide bridges follow: cysteine 35–cysteine 83, cysteine 49–cysteine 98, cysteine 52–cysteine 136, cysteine 60–cysteine 114, cysteine 64–cysteine 116, and cysteine 119–cysteine 126. The N-linked (GlcNAc...) asparagine glycan is linked to asparagine 39.

Belongs to the glycoprotein hormones subunit beta family. In terms of assembly, heterodimer of an alpha and a beta chain.

It localises to the secreted. Functionally, involved in gametogenesis and steroidogenesis. The protein is Gonadotropin subunit beta-2 (cgbb) of Ctenopharyngodon idella (Grass carp).